The chain runs to 69 residues: Small, acid-soluble spore protein A (69 aa).

The protein belongs to the alpha/beta-type SASP family.

SASP are bound to spore DNA. They are double-stranded DNA-binding proteins that cause DNA to change to an a-like conformation. They protect the DNA backbone from chemical and enzymatic cleavage and are thus involved in dormant spore's high resistance to UV light. This chain is Small, acid-soluble spore protein A (sspA), found in Bacillus subtilis (strain 168).